We begin with the raw amino-acid sequence, 109 residues long: Protein reprimo (109 aa).

Asn7 and Asn18 each carry an N-linked (GlcNAc...) asparagine glycan. The chain crosses the membrane as a helical span at residues 56-76 (VVQIAVMCVLSLTVVFGIFFL). Position 98 is a phosphoserine (Ser98).

The protein belongs to the reprimo family.

It is found in the cytoplasm. Its subcellular location is the membrane. May be involved in the regulation of p53-dependent G2 arrest of the cell cycle. Seems to induce cell cycle arrest by inhibiting CDK1 activity and nuclear translocation of the CDC2 cyclin B1 complex. The protein is Protein reprimo (Rprm) of Mus musculus (Mouse).